Here is a 623-residue protein sequence, read N- to C-terminus: DNA-directed RNA polymerase subunit gamma (623 aa).

Zn(2+) contacts are provided by C70, C72, C85, and C88. The Mg(2+) site is built by D466, D468, and D470.

Belongs to the RNA polymerase beta' chain family. RpoC1 subfamily. In cyanobacteria the RNAP catalytic core is composed of 2 alpha, 1 beta, 1 beta', 1 gamma and 1 omega subunit. When a sigma factor is associated with the core the holoenzyme is formed, which can initiate transcription. It depends on Mg(2+) as a cofactor. The cofactor is Zn(2+).

The enzyme catalyses RNA(n) + a ribonucleoside 5'-triphosphate = RNA(n+1) + diphosphate. Functionally, DNA-dependent RNA polymerase catalyzes the transcription of DNA into RNA using the four ribonucleoside triphosphates as substrates. In Acaryochloris marina (strain MBIC 11017), this protein is DNA-directed RNA polymerase subunit gamma.